Consider the following 592-residue polypeptide: Protein kinase C zeta type (592 aa).

The region spanning 15-98 is the PB1 domain; sequence RVRLKAHYGG…EVLIIHVFPS (84 aa). Positions 79–145 are interaction with SQSTM1; sequence AFRLVCQGRD…KRFNRGAYCG (67 aa). The Phorbol-ester/DAG-type zinc-finger motif lies at 130–180; the sequence is GHLFQAKRFNRGAYCGQCSERIWGLSRQGYRCINCKLLVHKRCHVLVPLTC. The 267-residue stretch at 252–518 folds into the Protein kinase domain; sequence FDLIRVIGRG…FSDIKSHAFF (267 aa). ATP is bound by residues 258 to 266 and K281; that span reads IGRGSYAKV. The active-site Proton acceptor is the D376. Position 410 is a phosphothreonine; by PDPK1 and PI3K (T410). Positions 519 to 590 constitute an AGC-kinase C-terminal domain; that stretch reads RSIDWDLLEK…INPLLLSAEE (72 aa). Position 560 is a phosphothreonine (T560). S591 carries the post-translational modification Phosphoserine.

Belongs to the protein kinase superfamily. AGC Ser/Thr protein kinase family. PKC subfamily. Interacts directly with SQSTM1. Forms a ternary complex with SQSTM1 and KCNAB2. Forms another ternary complex with SQSTM1 and GABRR3. Forms a complex with SQSTM1 and MAP2K5. Interacts with PARD6A, PARD6B and PARD6G. Part of a complex with PARD3, PARD6A or PARD6B or PARD6G and CDC42 or RAC1. Interacts with ADAP1/CENTA1. Interacts (via the protein kinase domain) with WWC1. Forms a tripartite complex with WWC1 and DDR1, but predominantly in the absence of collagen. Interacts with PDPK1 (via N-terminal region). Interacts with WDFY2 (via WD repeats 1-3). Interacts with VAMP2. Forms a complex with WDFY2 and VAMP2. Interacts with APPL1. Interacts with WWC1, WWC2 and WWC3. CDH5 is required for its phosphorylation at Thr-410. Phosphorylated by protein kinase PDPK1; phosphorylation is inhibited by the apoptotic C-terminal cleavage product of PKN2. Phosphorylation at Thr-410 by PI3K activates the kinase. In terms of tissue distribution, isoform 1: In brain, highly expressed in cerebellar granule neurons and cerebellar astrocytes (at protein level). Expressed at low levels in testes, lung and kidney. Isoform 2: Specifically expressed in brain where it localizes to cerebellar granule neurons (at protein level).

Its subcellular location is the cytoplasm. It localises to the endosome. The protein resides in the cell junction. It is found in the membrane. It catalyses the reaction L-seryl-[protein] + ATP = O-phospho-L-seryl-[protein] + ADP + H(+). The catalysed reaction is L-threonyl-[protein] + ATP = O-phospho-L-threonyl-[protein] + ADP + H(+). With respect to regulation, atypical PKCs (PRKCI and PRKCZ) exhibit an elevated basal enzymatic activity (that may be due to the interaction with SMG1 or SQSTM1) and are not regulated by diacylglycerol, phosphatidylserine, phorbol esters or calcium ions. Two specific sites, Thr-410 (activation loop of the kinase domain) and Thr-560 (turn motif), need to be phosphorylated for its full activation. Phosphatidylinositol 3,4,5-trisphosphate might be a physiological activator. Isoform 2: Constitutively active. Functionally, calcium- and diacylglycerol-independent serine/threonine-protein kinase that functions in phosphatidylinositol 3-kinase (PI3K) pathway and mitogen-activated protein (MAP) kinase cascade, and is involved in NF-kappa-B activation, mitogenic signaling, cell proliferation, cell polarity, inflammatory response and maintenance of long-term potentiation (LTP). Upon lipopolysaccharide (LPS) treatment in macrophages, or following mitogenic stimuli, functions downstream of PI3K to activate MAP2K1/MEK1-MAPK1/ERK2 signaling cascade independently of RAF1 activation. Required for insulin-dependent activation of AKT3, but may function as an adapter rather than a direct activator. Upon insulin treatment may act as a downstream effector of PI3K and contribute to the activation of translocation of the glucose transporter SLC2A4/GLUT4 and subsequent glucose transport in adipocytes. In EGF-induced cells, binds and activates MAP2K5/MEK5-MAPK7/ERK5 independently of its kinase activity and can activate JUN promoter through MEF2C. Through binding with SQSTM1/p62, functions in interleukin-1 signaling and activation of NF-kappa-B with the specific adapters RIPK1 and TRAF6. Participates in TNF-dependent transactivation of NF-kappa-B by phosphorylating and activating IKBKB kinase, which in turn leads to the degradation of NF-kappa-B inhibitors. In migrating astrocytes, forms a cytoplasmic complex with PARD6A and is recruited by CDC42 to function in the establishment of cell polarity along with the microtubule motor and dynein. In association with FEZ1, stimulates neuronal differentiation in PC12 cells. In the inflammatory response, is required for the T-helper 2 (Th2) differentiation process, including interleukin production, efficient activation of JAK1 and the subsequent phosphorylation and nuclear translocation of STAT6. May be involved in development of allergic airway inflammation (asthma), a process dependent on Th2 immune response. In the NF-kappa-B-mediated inflammatory response, can relieve SETD6-dependent repression of NF-kappa-B target genes by phosphorylating the RELA subunit at 'Ser-311'. Phosphorylates VAMP2 in vitro. Phosphorylates and activates LRRK1, which phosphorylates RAB proteins involved in intracellular trafficking. Involved in late synaptic long term potentiation phase in CA1 hippocampal cells and long term memory maintenance. This chain is Protein kinase C zeta type (Prkcz), found in Mus musculus (Mouse).